Reading from the N-terminus, the 425-residue chain is Serine--tRNA ligase (425 aa).

L-serine is bound at residue Thr-233–Glu-235. Arg-264–Glu-266 is an ATP binding site. Glu-287 serves as a coordination point for L-serine. Glu-351–Ser-354 serves as a coordination point for ATP. Ser-387 contributes to the L-serine binding site.

It belongs to the class-II aminoacyl-tRNA synthetase family. Type-1 seryl-tRNA synthetase subfamily. In terms of assembly, homodimer. The tRNA molecule binds across the dimer.

The protein localises to the cytoplasm. It carries out the reaction tRNA(Ser) + L-serine + ATP = L-seryl-tRNA(Ser) + AMP + diphosphate + H(+). The enzyme catalyses tRNA(Sec) + L-serine + ATP = L-seryl-tRNA(Sec) + AMP + diphosphate + H(+). The protein operates within aminoacyl-tRNA biosynthesis; selenocysteinyl-tRNA(Sec) biosynthesis; L-seryl-tRNA(Sec) from L-serine and tRNA(Sec): step 1/1. In terms of biological role, catalyzes the attachment of serine to tRNA(Ser). Is also able to aminoacylate tRNA(Sec) with serine, to form the misacylated tRNA L-seryl-tRNA(Sec), which will be further converted into selenocysteinyl-tRNA(Sec). The protein is Serine--tRNA ligase of Thermotoga neapolitana (strain ATCC 49049 / DSM 4359 / NBRC 107923 / NS-E).